Reading from the N-terminus, the 254-residue chain is Imidazole glycerol phosphate synthase subunit HisF (254 aa).

Catalysis depends on residues aspartate 11 and aspartate 130.

The protein belongs to the HisA/HisF family. Heterodimer of HisH and HisF.

The protein localises to the cytoplasm. It catalyses the reaction 5-[(5-phospho-1-deoxy-D-ribulos-1-ylimino)methylamino]-1-(5-phospho-beta-D-ribosyl)imidazole-4-carboxamide + L-glutamine = D-erythro-1-(imidazol-4-yl)glycerol 3-phosphate + 5-amino-1-(5-phospho-beta-D-ribosyl)imidazole-4-carboxamide + L-glutamate + H(+). It functions in the pathway amino-acid biosynthesis; L-histidine biosynthesis; L-histidine from 5-phospho-alpha-D-ribose 1-diphosphate: step 5/9. Functionally, IGPS catalyzes the conversion of PRFAR and glutamine to IGP, AICAR and glutamate. The HisF subunit catalyzes the cyclization activity that produces IGP and AICAR from PRFAR using the ammonia provided by the HisH subunit. The chain is Imidazole glycerol phosphate synthase subunit HisF from Chromobacterium violaceum (strain ATCC 12472 / DSM 30191 / JCM 1249 / CCUG 213 / NBRC 12614 / NCIMB 9131 / NCTC 9757 / MK).